The following is an 83-amino-acid chain: Large ribosomal subunit protein bL31 (83 aa).

The protein belongs to the bacterial ribosomal protein bL31 family. Type A subfamily. As to quaternary structure, part of the 50S ribosomal subunit.

Binds the 23S rRNA. In Synechococcus sp. (strain CC9605), this protein is Large ribosomal subunit protein bL31.